The primary structure comprises 492 residues: 2,3-bisphosphoglycerate-independent phosphoglycerate mutase (492 aa).

Mn(2+) is bound by residues D11 and S61. S61 acts as the Phosphoserine intermediate in catalysis. Substrate is bound by residues H118, 147-148 (RD), R178, R184, 248-251 (RNDR), and K320. Mn(2+)-binding residues include D386, H390, D427, H428, and H445.

This sequence belongs to the BPG-independent phosphoglycerate mutase family. Monomer. Mn(2+) is required as a cofactor.

The catalysed reaction is (2R)-2-phosphoglycerate = (2R)-3-phosphoglycerate. The protein operates within carbohydrate degradation; glycolysis; pyruvate from D-glyceraldehyde 3-phosphate: step 3/5. Functionally, catalyzes the interconversion of 2-phosphoglycerate and 3-phosphoglycerate. The protein is 2,3-bisphosphoglycerate-independent phosphoglycerate mutase of Campylobacter jejuni (strain RM1221).